Here is a 274-residue protein sequence, read N- to C-terminus: MAPKLQWPIVTELTTASASRGAATGSRGVAPAVPRGGAPADVAHPQTIKSFVRRAGRTTAAQARAFEDLGPRFVVPYAPIAPIAPIAPAAPAAGAWFGRDAPLVLEIGFGMGEATAHIARVRPQDDFLCCEVHRPGVGALLKRIAEHGLTNIRILEHDAVEVIDHMLPESCLAGVHIFFPDPWHKSRHHKRRLIQPPLVARLAARLQAGGYLHCATDWQPYAEQMLQVLGAEPLLRNTAPGFAPKPGYRPLTKFENRGLRLGHGVRDLVFERRH.

Positions 16–40 (ASASRGAATGSRGVAPAVPRGGAPA) are disordered. S-adenosyl-L-methionine contacts are provided by Glu106, Glu131, Asp158, and Asp181. Residue Asp181 is part of the active site. Substrate-binding positions include Lys185, Asp217, and 252–255 (TKFE).

The protein belongs to the class I-like SAM-binding methyltransferase superfamily. TrmB family.

The enzyme catalyses guanosine(46) in tRNA + S-adenosyl-L-methionine = N(7)-methylguanosine(46) in tRNA + S-adenosyl-L-homocysteine. Its pathway is tRNA modification; N(7)-methylguanine-tRNA biosynthesis. Its function is as follows. Catalyzes the formation of N(7)-methylguanine at position 46 (m7G46) in tRNA. The protein is tRNA (guanine-N(7)-)-methyltransferase of Verminephrobacter eiseniae (strain EF01-2).